Consider the following 149-residue polypeptide: Macrodomain Ter protein (149 aa).

The protein belongs to the MatP family. Homodimer.

The protein localises to the cytoplasm. Required for spatial organization of the terminus region of the chromosome (Ter macrodomain) during the cell cycle. Prevents early segregation of duplicated Ter macrodomains during cell division. Binds specifically to matS, which is a 13 bp signature motif repeated within the Ter macrodomain. The sequence is that of Macrodomain Ter protein from Vibrio parahaemolyticus serotype O3:K6 (strain RIMD 2210633).